Consider the following 828-residue polypeptide: MLGNLLRNKTSSSGFEKSSEHSDFSSVVPNVPVYCKAASTGTTKTAAGALLDTAVNVEKPSEMLSTTSPPILDHISDDLKLKLFGSRDIPYSRPIDTLQNNGGLGTDKITSINEKTYAFRILIIEEAGQMACRNNYRDIFDYTTSKISNSMEQIRPSELKEYIFGSPVRSSDLTQCDKIRTIPNSDLVLITRIFYYTHQYNRIAISLCIPRILLPVVAESWSSISSWLTQTQKMLIGFLTKNRIMQENTGNYSNNSVIKLSNIDIRTHYPKEIEIMVQTLQKRVIPGLRSMSEIPRLFLYPETFKEFVHVWFKSIFNWIEIKDGPKLGFLPLLMAMIISDYRHTIRELKTSKIVILSGNMVVANKLLFILSALLEPKYKGQITIRRENIRSDSSAVSRNKSNNNFVDKPETELSTLTSTDNLLSRTENNSNHNYNNSNVSSNSIGSPNFHSLRKGWQIPNRRNSNTSVSVSSSESLAEVIQPSSFKSGSSSLHYLSSSISSQPGSYGSWFNKRPTISQFFQPSPSLKHNESWERLQTTAGNMQRTSSSSSLQQATSRLSLTTPQQSPSISEYDEYPWMGTPGSPNVGDVSHAPPLVKNISYKFPLKNVELKRDCQRISQDDLLDEAFERICQPSLADLNSTYEIFPGNSSYADILTTDSDIDDGLMNKPLELLPKYTMYLTHFNNFFQLQACPAGQESESRITNSMKIDLLKADYTRSLLVSLRSRDIRDVALKREFTGNNNNNSNQNIYDENFVGKRKYVLKQKTRKIFSCGKIGKLSTSLENCVNFVENSIKSAMMLYDDNGIDSELRDSEALRIFSSLVHYCNAG.

The interval 1–25 (MLGNLLRNKTSSSGFEKSSEHSDFS) is disordered. A uDENN FNIP1/2-type domain is found at 114–302 (EKTYAFRILI…EIPRLFLYPE (189 aa)). Residues 310 to 712 (VWFKSIFNWI…TNSMKIDLLK (403 aa)) enclose the cDENN FNIP1/2-type domain. A compositionally biased stretch (polar residues) spans 392–405 (DSSAVSRNKSNNNF). Disordered stretches follow at residues 392 to 411 (DSSAVSRNKSNNNFVDKPET), 423 to 444 (LSRTENNSNHNYNNSNVSSNSI), and 538 to 569 (TAGNMQRTSSSSSLQQATSRLSLTTPQQSPSI). Position 401 is a phosphoserine (Ser-401). Low complexity predominate over residues 543-562 (QRTSSSSSLQQATSRLSLTT). The region spanning 718–825 (SLLVSLRSRD…RIFSSLVHYC (108 aa)) is the dDENN FNIP1/2-type domain.

The protein belongs to the LST4 family.

In terms of biological role, involved in extracellular amino acid uptake. Required for the trafficking of the GAP1 nitrogen-regulated general amino acid permease from the Golgi to the plasma membrane. The sequence is that of Protein LST4 (LST4) from Saccharomyces cerevisiae (strain ATCC 204508 / S288c) (Baker's yeast).